The following is a 236-amino-acid chain: Lipoprotein B (236 aa).

The signal sequence occupies residues 1 to 27; that stretch reads MNKKYFKKYSSILIFSMSILAPMTLAS. C28 is lipidated: N-palmitoyl cysteine. C28 carries the S-diacylglycerol cysteine lipid modification. Disordered regions lie at residues 35 to 112 and 134 to 236; these read EKDK…KSNV and SEKQ…GDAF. Residues 43–60 are compositionally biased toward polar residues; that stretch reads STNLSEPNKSNTSKTNTF. The span at 61–74 shows a compositional bias: basic and acidic residues; sequence QDKKDSTNKIDSQE. Composition is skewed to polar residues over residues 75–112 and 143–157; these read SSKT…KSNV and NASS…NTLK. The span at 158 to 175 shows a compositional bias: basic and acidic residues; that stretch reads NQDKTKQENDQFKQESKD. Residues 193 to 212 show a composition bias toward polar residues; it reads VISSQSTTRLEMPKNDQSNS. Over residues 215-228 the composition is skewed to basic and acidic residues; sequence EDNKKSPESPKWWE.

The protein belongs to the M.pulmonis LipAB lipoprotein family.

The protein localises to the cell membrane. This is Lipoprotein B (lipB) from Mycoplasmopsis pulmonis (strain UAB CTIP) (Mycoplasma pulmonis).